Reading from the N-terminus, the 337-residue chain is MRVLGIETSCDETGIAIYDDKKGLLANQLYSQVKLHADYGGVVPELASRDHVRKTVPLIQAALKEAALTASDIDAVAYTAGPGLVGALLVGATVGRSLAFAWNVPAIPVHHMEGHLLAPMLEDNPPDFPFVALLVSGGHTQLISVTGIGQYELLGESIDDAAGEAFDKTAKLLGLDYPGGPMLSKMASQGTAGRFVFPRPMTDRPGLDFSFSGLKTFAANTIRSNGDDEQTRADIARAFEDAVVDTLMIKCKRALESTGFKRLVMAGGVSANRTLRAKLAEMMQKRRGEVFYARPEFCTDNGAMIAYAGMVRFKAGVTADLGVTVRPRWPLAELPAA.

Positions 111 and 115 each coordinate Fe cation. Substrate is bound by residues 134 to 138 (LVSGG), aspartate 167, glycine 180, and asparagine 272. Residue aspartate 300 participates in Fe cation binding.

Belongs to the KAE1 / TsaD family. Fe(2+) serves as cofactor.

Its subcellular location is the cytoplasm. It carries out the reaction L-threonylcarbamoyladenylate + adenosine(37) in tRNA = N(6)-L-threonylcarbamoyladenosine(37) in tRNA + AMP + H(+). Its function is as follows. Required for the formation of a threonylcarbamoyl group on adenosine at position 37 (t(6)A37) in tRNAs that read codons beginning with adenine. Is involved in the transfer of the threonylcarbamoyl moiety of threonylcarbamoyl-AMP (TC-AMP) to the N6 group of A37, together with TsaE and TsaB. TsaD likely plays a direct catalytic role in this reaction. In Salmonella typhi, this protein is tRNA N6-adenosine threonylcarbamoyltransferase.